A 435-amino-acid polypeptide reads, in one-letter code: Tol-Pal system protein TolB (435 aa).

A signal peptide spans 1–20 (MRKIIAGVFIFVFLISNLYA).

The protein belongs to the TolB family. In terms of assembly, the Tol-Pal system is composed of five core proteins: the inner membrane proteins TolA, TolQ and TolR, the periplasmic protein TolB and the outer membrane protein Pal. They form a network linking the inner and outer membranes and the peptidoglycan layer.

It is found in the periplasm. Its function is as follows. Part of the Tol-Pal system, which plays a role in outer membrane invagination during cell division and is important for maintaining outer membrane integrity. The chain is Tol-Pal system protein TolB from Francisella tularensis subsp. tularensis (strain WY96-3418).